The chain runs to 490 residues: 3-octaprenyl-4-hydroxybenzoate carboxy-lyase (490 aa).

Position 172 (Asn172) interacts with Mn(2+). Residues 175-177 (IYR), 189-191 (RWL), and 194-195 (RG) each bind prenylated FMN. Position 238 (Glu238) interacts with Mn(2+). The active-site Proton donor is Asp287.

This sequence belongs to the UbiD family. Homohexamer. It depends on prenylated FMN as a cofactor. Mn(2+) serves as cofactor.

The protein localises to the cell membrane. The catalysed reaction is a 4-hydroxy-3-(all-trans-polyprenyl)benzoate + H(+) = a 2-(all-trans-polyprenyl)phenol + CO2. Its pathway is cofactor biosynthesis; ubiquinone biosynthesis. In terms of biological role, catalyzes the decarboxylation of 3-octaprenyl-4-hydroxy benzoate to 2-octaprenylphenol, an intermediate step in ubiquinone biosynthesis. The sequence is that of 3-octaprenyl-4-hydroxybenzoate carboxy-lyase from Saccharophagus degradans (strain 2-40 / ATCC 43961 / DSM 17024).